The sequence spans 314 residues: Ribonuclease Z (314 aa).

Zn(2+) is bound by residues histidine 62, histidine 64, aspartate 66, histidine 67, histidine 144, aspartate 215, and histidine 273. Aspartate 66 serves as the catalytic Proton acceptor.

Belongs to the RNase Z family. As to quaternary structure, homodimer. Zn(2+) is required as a cofactor.

The catalysed reaction is Endonucleolytic cleavage of RNA, removing extra 3' nucleotides from tRNA precursor, generating 3' termini of tRNAs. A 3'-hydroxy group is left at the tRNA terminus and a 5'-phosphoryl group is left at the trailer molecule.. Zinc phosphodiesterase, which displays some tRNA 3'-processing endonuclease activity. Probably involved in tRNA maturation, by removing a 3'-trailer from precursor tRNA. The sequence is that of Ribonuclease Z from Prochlorococcus marinus (strain NATL2A).